We begin with the raw amino-acid sequence, 118 residues long: Large ribosomal subunit protein bL20 (118 aa).

It belongs to the bacterial ribosomal protein bL20 family.

In terms of biological role, binds directly to 23S ribosomal RNA and is necessary for the in vitro assembly process of the 50S ribosomal subunit. It is not involved in the protein synthesizing functions of that subunit. This chain is Large ribosomal subunit protein bL20, found in Thermus thermophilus (strain ATCC BAA-163 / DSM 7039 / HB27).